We begin with the raw amino-acid sequence, 120 residues long: BLOC-1-related complex subunit 8 (120 aa).

The interval Met101–Ala120 is disordered. Ser109 is subject to Phosphoserine.

Belongs to the BORCS8 family. In terms of assembly, component of the BLOC-one-related complex (BORC) which is composed of BLOC1S1, BLOC1S2, BORCS5, BORCS6, BORCS7, BORCS8, KXD1 and SNAPIN.

The protein localises to the lysosome membrane. In terms of biological role, as part of the BLOC-one-related complex (BORC), it plays a role in the movement and localization of lysosomes at the cell periphery. Associated with the cytosolic face of lysosomes, BORC recruits ARL8B to the lysosomal membrane and couples lysosomes to microtubule plus-end-directed kinesin motors, driving lysosome movement toward the cell periphery. The sequence is that of BLOC-1-related complex subunit 8 from Mus musculus (Mouse).